Reading from the N-terminus, the 338-residue chain is Aspartate--ammonia ligase (338 aa).

The protein belongs to the class-II aminoacyl-tRNA synthetase family. AsnA subfamily.

It is found in the cytoplasm. The catalysed reaction is L-aspartate + NH4(+) + ATP = L-asparagine + AMP + diphosphate + H(+). It participates in amino-acid biosynthesis; L-asparagine biosynthesis; L-asparagine from L-aspartate (ammonia route): step 1/1. This chain is Aspartate--ammonia ligase, found in Lactobacillus delbrueckii subsp. bulgaricus (strain ATCC BAA-365 / Lb-18).